The following is a 264-amino-acid chain: Claudin-18 (264 aa).

The Cytoplasmic portion of the chain corresponds to 1-6 (MATTTC). A helical membrane pass occupies residues 7–27 (QVVGLLLSLLGLAGCIAATGM). At 28–80 (DMWSTQDLYDNPVTAVFQYEGLWRSCVQQSSGFTECRPYFTILGLPAMLQAVR) the chain is on the extracellular side. The chain crosses the membrane as a helical span at residues 81–101 (ALMIVGIVLGVIGILVSIFAL). Residues 102-122 (KCIRIGSMDDSAKAKMTLTSG) are Cytoplasmic-facing. The helical transmembrane segment at 123–143 (ILFIISGICAIIGVSVFANML) threads the bilayer. At 144–176 (VTNFWMSTANMYSGMGGMGGMVQTVQTRYTFGA) the chain is on the extracellular side. Residues 177–197 (ALFVGWVAGGLTLIGGVMMCI) form a helical membrane-spanning segment. Topologically, residues 198–264 (ACRGLTPDDS…QSHPTKYDYV (67 aa)) are cytoplasmic. Residues 198-264 (ACRGLTPDDS…QSHPTKYDYV (67 aa)) are required for role in regulation of RANKL-induced osteoclast differentiation. Position 217 is a phosphoserine (serine 217). Positions 241–264 (KKIYDGGARTEDDEQSHPTKYDYV) are disordered. Residues 242 to 264 (KIYDGGARTEDDEQSHPTKYDYV) are compositionally biased toward basic and acidic residues.

It belongs to the claudin family. As to quaternary structure, interacts with TJP2/ZO-2. Interacts with TJP1/ZO-1. Interacts with YAP1 (phosphorylated); the interaction sequesters YAP1 away from the nucleus and thereby restricts transcription of YAP1 target genes. Interacts with CLDN19. Expressed in the lung (at protein level). As to expression, expressed in lung. Expressed in the stomach. In terms of tissue distribution, expressed in lung. Expressed in stomach. Expressed in bone. As to expression, expressed in stomach.

Its subcellular location is the cell junction. The protein localises to the tight junction. The protein resides in the cell membrane. It is found in the lateral cell membrane. Functionally, involved in alveolar fluid homeostasis via regulation of alveolar epithelial tight junction composition and therefore ion transport and solute permeability, potentially via downstream regulation of the actin cytoskeleton organization and beta-2-adrenergic signaling. Required for lung alveolarization and maintenance of the paracellular alveolar epithelial barrier. Acts to maintain epithelial progenitor cell proliferation and organ size, via regulation of YAP1 localization away from the nucleus and thereby restriction of YAP1 target gene transcription. Acts as a negative regulator of RANKL-induced osteoclast differentiation, potentially via relocation of TJP2/ZO-2 away from the nucleus, subsequently involved in bone resorption in response to calcium deficiency. Mediates the osteoprotective effects of estrogen, potentially via acting downstream of estrogen signaling independently of RANKL signaling pathways. In terms of biological role, involved in the maintenance of homeostasis of the alveolar microenvironment via regulation of pH and subsequent T-cell activation in the alveolar space, is therefore indirectly involved in limiting C.neoformans infection. Its function is as follows. Required for the formation of the gastric paracellular barrier via its role in tight junction formation, thereby involved in the response to gastric acidification. This Mus musculus (Mouse) protein is Claudin-18 (Cldn18).